Here is a 90-residue protein sequence, read N- to C-terminus: Acylphosphatase (90 aa).

Residues 3–90 form the Acylphosphatase-like domain; the sequence is RYSAIVQGRV…DGEKKFSIKY (88 aa). Residues arginine 18 and asparagine 36 contribute to the active site.

Belongs to the acylphosphatase family.

The catalysed reaction is an acyl phosphate + H2O = a carboxylate + phosphate + H(+). The chain is Acylphosphatase (acyP) from Clostridium beijerinckii (strain ATCC 51743 / NCIMB 8052) (Clostridium acetobutylicum).